We begin with the raw amino-acid sequence, 443 residues long: Putative F-box/FBD/LRR-repeat protein At5g22670 (443 aa).

The region spanning 10–56 (QDSISLLPDDLLCRILSNLPTKVAVRTSVLSKRWKRFSLSVPLLEFN) is the F-box domain. 5 LRR repeats span residues 139-165 (SLRLHNVSLPDFDHVSLPRLKTMHLID), 166-191 (NIYPNDALLENLISSCPVLEDLNVSR), 219-243 (YGDIEDDSWEVVIDAPRLSYLSLRD), 275-300 (NFLLTRSVVRNFFTRLSSVRDMTMSG), and 325-353 (YAVFCNSDLEKLPNFLESCPNLKSLVLEL). The FBD domain occupies 361-412 (LLILSSSIPKCLRSSLEHVEIHTPISGAEAEMKLVKYFLENSAVLKKFTLQL).

In Arabidopsis thaliana (Mouse-ear cress), this protein is Putative F-box/FBD/LRR-repeat protein At5g22670.